The chain runs to 155 residues: Ribonuclease H (155 aa).

Positions 5–146 constitute an RNase H type-1 domain; that stretch reads DQKPVIIHTD…ADQLARDGLT (142 aa). Mg(2+) is bound by residues D14, E52, D74, and D138. Residues 133 to 155 are disordered; it reads ENERADQLARDGLTENRMKSRVK.

It belongs to the RNase H family. As to quaternary structure, monomer. The cofactor is Mg(2+).

The protein resides in the cytoplasm. It catalyses the reaction Endonucleolytic cleavage to 5'-phosphomonoester.. Its function is as follows. Endonuclease that specifically degrades the RNA of RNA-DNA hybrids. The chain is Ribonuclease H from Rhodopseudomonas palustris (strain ATCC BAA-98 / CGA009).